The chain runs to 307 residues: Thymidylate synthase (307 aa).

The disordered stretch occupies residues 1–22 (MLVEGSELQSGAQQPRTEAPQH). Polar residues predominate over residues 7–16 (ELQSGAQQPR). A dUMP-binding site is contributed by arginine 44. Residue serine 108 is modified to Phosphoserine. Residues 169 to 170 (RR), 189 to 190 (CH), 209 to 212 (RSGD), asparagine 220, and 250 to 252 (HIY) each bind dUMP. Cysteine 189 functions as the Nucleophile in the catalytic mechanism. Aspartate 212 is a (6R)-5,10-methylene-5,6,7,8-tetrahydrofolate binding site. Glycyl lysine isopeptide (Lys-Gly) (interchain with G-Cter in SUMO2) cross-links involve residues lysine 286 and lysine 302. Alanine 306 contacts (6R)-5,10-methylene-5,6,7,8-tetrahydrofolate.

This sequence belongs to the thymidylate synthase family. As to quaternary structure, homodimer.

It is found in the nucleus. Its subcellular location is the cytoplasm. The protein localises to the mitochondrion. The protein resides in the mitochondrion matrix. It localises to the mitochondrion inner membrane. It catalyses the reaction dUMP + (6R)-5,10-methylene-5,6,7,8-tetrahydrofolate = 7,8-dihydrofolate + dTMP. Its pathway is pyrimidine metabolism; dTTP biosynthesis. In terms of biological role, catalyzes the reductive methylation of 2'-deoxyuridine 5'-monophosphate (dUMP) to thymidine 5'-monophosphate (dTMP), using the cosubstrate, 5,10- methylenetetrahydrofolate (CH2H4folate) as a 1-carbon donor and reductant and contributes to the de novo mitochondrial thymidylate biosynthesis pathway. The sequence is that of Thymidylate synthase (Tyms) from Rattus norvegicus (Rat).